The chain runs to 353 residues: MILLSSSISLSRPVSSQSFSPPAATSTRRSHSSVTVKCCCSSRRLLKNPELKCSLENLFEIQALRKCFVSGFAAILLLSQAGQGIALDLSSGYQNICQLGSAAAVGENKLTLPSDGDSESMMMMMMRGMTAKNFDPVRYSGRWFEVASLKRGFAGQGQEDCHCTQGVYTFDMKESAIRVDTFCVHGSPDGYITGIRGKVQCVGAEDLEKSETDLEKQEMIKEKCFLRFPTIPFIPKLPYDVIATDYDNYALVSGAKDKGFVQVYSRTPNPGPEFIAKYKNYLAQFGYDPEKIKDTPQDCEVTDAELAAMMSMPGMEQTLTNQFPDLGLRKSVQFDPFTSVFETLKKLVPLYFK.

The span at 1–18 (MILLSSSISLSRPVSSQS) shows a compositional bias: low complexity. Residues 1-27 (MILLSSSISLSRPVSSQSFSPPAATST) form a disordered region. The N-terminal 39 residues, 1–39 (MILLSSSISLSRPVSSQSFSPPAATSTRRSHSSVTVKCC), are a transit peptide targeting the chloroplast. An intrachain disulfide couples Cys163 to Cys299.

The protein belongs to the calycin superfamily. Lipocalin family. Expressed in leaves at low levels (at protein levels). Present in seeds.

It is found in the plastid. The protein localises to the chloroplast thylakoid lumen. Functionally, lipocalin that prevents thylakoidal membrane lipids peroxidation and confers protection against oxidative stress, especially mediated by singlet oxygen in response to high light and other stress (e.g. heat shocks). Required for seed longevity by ensuring polyunsaturated lipids integrity. The polypeptide is Chloroplastic lipocalin (Arabidopsis thaliana (Mouse-ear cress)).